The following is a 420-amino-acid chain: Deoxyribodipyrimidine photo-lyase (420 aa).

In terms of domain architecture, Photolyase/cryptochrome alpha/beta spans 2 to 124 (GPLLVWHRGD…PLHLLPAPHL (123 aa)). The tract at residues 152-175 (APEALPKGPEEGEIPREDPGLPLP) is disordered. Residues 159 to 170 (GPEEGEIPREDP) are compositionally biased toward basic and acidic residues. FAD is bound at residue Tyr197. Position 201 (Arg201) interacts with DNA. 209 to 213 (GSRLS) is a binding site for FAD. Interaction with DNA regions lie at residues 244–251 (ELLWRDFS) and 310–311 (NR). 341–343 (DGD) contacts FAD. DNA is bound at residue Gln373.

It belongs to the DNA photolyase class-1 family. Monomer. FAD is required as a cofactor.

The catalysed reaction is cyclobutadipyrimidine (in DNA) = 2 pyrimidine residues (in DNA).. Involved in repair of UV radiation-induced DNA damage. Catalyzes the light-dependent monomerization (300-600 nm) of cyclobutyl pyrimidine dimers (in cis-syn configuration), which are formed between adjacent bases on the same DNA strand upon exposure to ultraviolet radiation. This Thermus thermophilus (strain ATCC BAA-163 / DSM 7039 / HB27) protein is Deoxyribodipyrimidine photo-lyase (phr).